The sequence spans 292 residues: 1D-myo-inositol 2-acetamido-2-deoxy-alpha-D-glucopyranoside deacetylase (292 aa).

The Zn(2+) site is built by His12, Asp15, and His147.

The protein belongs to the MshB deacetylase family. Requires Zn(2+) as cofactor.

It carries out the reaction 1D-myo-inositol 2-acetamido-2-deoxy-alpha-D-glucopyranoside + H2O = 1D-myo-inositol 2-amino-2-deoxy-alpha-D-glucopyranoside + acetate. In terms of biological role, catalyzes the deacetylation of 1D-myo-inositol 2-acetamido-2-deoxy-alpha-D-glucopyranoside (GlcNAc-Ins) in the mycothiol biosynthesis pathway. The polypeptide is 1D-myo-inositol 2-acetamido-2-deoxy-alpha-D-glucopyranoside deacetylase (Rhodococcus jostii (strain RHA1)).